A 445-amino-acid polypeptide reads, in one-letter code: UDP-N-acetylmuramoylalanine--D-glutamate ligase (445 aa).

118 to 124 (GTNGKTT) contributes to the ATP binding site.

This sequence belongs to the MurCDEF family.

The protein localises to the cytoplasm. It carries out the reaction UDP-N-acetyl-alpha-D-muramoyl-L-alanine + D-glutamate + ATP = UDP-N-acetyl-alpha-D-muramoyl-L-alanyl-D-glutamate + ADP + phosphate + H(+). The protein operates within cell wall biogenesis; peptidoglycan biosynthesis. In terms of biological role, cell wall formation. Catalyzes the addition of glutamate to the nucleotide precursor UDP-N-acetylmuramoyl-L-alanine (UMA). This Macrococcus caseolyticus (strain JCSC5402) (Macrococcoides caseolyticum) protein is UDP-N-acetylmuramoylalanine--D-glutamate ligase.